We begin with the raw amino-acid sequence, 631 residues long: Phosphomethylpyrimidine synthase (631 aa).

Substrate contacts are provided by residues Asn-239, Met-268, Tyr-297, His-333, 353–355 (SRG), 394–397 (DGLR), and Glu-433. His-437 is a Zn(2+) binding site. Residue Tyr-460 coordinates substrate. His-501 lines the Zn(2+) pocket. Residues Cys-581, Cys-584, and Cys-589 each contribute to the [4Fe-4S] cluster site.

Belongs to the ThiC family. Homodimer. The cofactor is [4Fe-4S] cluster.

The enzyme catalyses 5-amino-1-(5-phospho-beta-D-ribosyl)imidazole + S-adenosyl-L-methionine = 4-amino-2-methyl-5-(phosphooxymethyl)pyrimidine + CO + 5'-deoxyadenosine + formate + L-methionine + 3 H(+). The protein operates within cofactor biosynthesis; thiamine diphosphate biosynthesis. In terms of biological role, catalyzes the synthesis of the hydroxymethylpyrimidine phosphate (HMP-P) moiety of thiamine from aminoimidazole ribotide (AIR) in a radical S-adenosyl-L-methionine (SAM)-dependent reaction. The polypeptide is Phosphomethylpyrimidine synthase (Shigella flexneri serotype 5b (strain 8401)).